Reading from the N-terminus, the 550-residue chain is Acetyl-coenzyme A transporter 1 (550 aa).

The Cytoplasmic segment spans residues Met1–Ser74. A Phosphoserine modification is found at Ser42. Residues Ile75–Ile95 traverse the membrane as a helical segment. Residues Pro96–Ser113 lie on the Extracellular side of the membrane. Asn103 carries N-linked (GlcNAc...) asparagine glycosylation. The chain crosses the membrane as a helical span at residues Phe114 to Phe134. The Cytoplasmic portion of the chain corresponds to Lys135 to Lys141. The chain crosses the membrane as a helical span at residues Ser142–Val162. The Extracellular portion of the chain corresponds to Asp163–Thr256. A helical membrane pass occupies residues Leu257–Leu277. The Cytoplasmic portion of the chain corresponds to Leu278–Lys300. The chain crosses the membrane as a helical span at residues Leu301–Ser321. Topologically, residues Lys322–Glu344 are extracellular. Residues His345–Ser365 form a helical membrane-spanning segment. The Cytoplasmic portion of the chain corresponds to Lys366–Asn375. A helical transmembrane segment spans residues Ile376–Trp396. The Extracellular segment spans residues Trp397 to Gly405. A helical membrane pass occupies residues Gly406–Leu426. Over Tyr427–Asp509 the chain is Cytoplasmic. The helical transmembrane segment at Gly510–Gly530 threads the bilayer. Over Pro531–Asn550 the chain is Extracellular.

Belongs to the SLC33A transporter family. In terms of assembly, homodimerizes. In terms of tissue distribution, expressed in brain at all developmental stages. Detected in hippocampus, hypothalamus, cerebellum, cortex, olfactory bulb, and the ventral and dorsal anterior olfactory nucleus.

It is found in the endoplasmic reticulum membrane. It catalyses the reaction acetyl-CoA(in) = acetyl-CoA(out). In terms of biological role, acetyl-CoA transporter that mediates active acetyl-CoA import through the endoplasmic reticulum (ER) membrane into the ER lumen where specific ER-based acetyl-CoA:lysine acetyltransferases are responsible for the acetylation of ER-based protein substrates, such as BACE1. Necessary for O-acetylation of gangliosides. The polypeptide is Acetyl-coenzyme A transporter 1 (Slc33a1) (Rattus norvegicus (Rat)).